Reading from the N-terminus, the 802-residue chain is Phenylalanine--tRNA ligase beta subunit (802 aa).

The region spanning 38–149 (KSSLKPFVIA…ADAPVGTSFA (112 aa)) is the tRNA-binding domain. Residues 399–474 (HKPKIVSFPI…RIHGVDNIAP (76 aa)) form the B5 domain. Asp452, Asp458, Glu461, and Glu462 together coordinate Mg(2+). In terms of domain architecture, FDX-ACB spans 708–801 (SAFQAVKRDF…VGKQTGGVLR (94 aa)).

It belongs to the phenylalanyl-tRNA synthetase beta subunit family. Type 1 subfamily. In terms of assembly, tetramer of two alpha and two beta subunits. Requires Mg(2+) as cofactor.

It is found in the cytoplasm. It catalyses the reaction tRNA(Phe) + L-phenylalanine + ATP = L-phenylalanyl-tRNA(Phe) + AMP + diphosphate + H(+). The sequence is that of Phenylalanine--tRNA ligase beta subunit from Mesorhizobium japonicum (strain LMG 29417 / CECT 9101 / MAFF 303099) (Mesorhizobium loti (strain MAFF 303099)).